We begin with the raw amino-acid sequence, 196 residues long: Carnitine operon protein CaiE (196 aa).

The disordered stretch occupies residues 173–196; the sequence is TQPLRQMEENRPRLQGTTDVTPKR. Polar residues predominate over residues 187 to 196; it reads QGTTDVTPKR.

It belongs to the transferase hexapeptide repeat family.

Its pathway is amine and polyamine metabolism; carnitine metabolism. Overproduction of CaiE stimulates the activity of CaiB and CaiD. This Escherichia coli O6:K15:H31 (strain 536 / UPEC) protein is Carnitine operon protein CaiE.